A 637-amino-acid polypeptide reads, in one-letter code: SCF-associated factor 1 (637 aa).

An F-box domain is found at 14–63 (GLSPDIVQATLPFLSSDDIKNLSQTNKYYNTLLDFDHSKILWHELFHKAF). S16 is subject to Phosphoserine. The stretch at 109–202 (AKFYSWGYLK…GFSFQILTES (94 aa)) is one RCC1 1 repeat. Positions 242–315 (YPRITSRSNG…RTTMPSMGPH (74 aa)) are disordered. Polar residues predominate over residues 244 to 260 (RITSRSNGSTVNTTGTF). Phosphoserine is present on S266. Low complexity predominate over residues 289-305 (SGGAPAASPGGSHSGVP). An RCC1 2 repeat occupies 565–635 (GHLYSWGIES…GWQTGALIIK (71 aa)).

Interacts with AAH1, SKP1 and CDC53. Component of the SCF(SAF1) complex containing CDC53, SKP1, HRT1 and SAF1.

The protein operates within protein modification; protein ubiquitination. Substrate recognition component of a SCF (SKP1-CUL1-F-box protein) E3 ubiquitin-protein ligase complex which mediates the ubiquitination and subsequent proteasomal degradation of target proteins. Targets AAH1 adenine deaminase for proteasome-dependent degradation upon entry into quiescence. Targets also URA7. The chain is SCF-associated factor 1 (SAF1) from Saccharomyces cerevisiae (strain ATCC 204508 / S288c) (Baker's yeast).